The chain runs to 151 residues: MSTPDNRSVNFFSLFCRGQHYSKTWPLEKRLAPVFVENRVIKMTRYAIRFMPPIAVFTLCWQIALGGQLGPAVATALFALSLPMQGLWWLGKRSVTPLPPAILNWFYEVRGKLQESGQVLAPVEGKPDYQALADTLKRAFKQLDKTFLDDL.

Over 1–45 the chain is Cytoplasmic; the sequence is MSTPDNRSVNFFSLFCRGQHYSKTWPLEKRLAPVFVENRVIKMTR. A helical membrane pass occupies residues 46–65; that stretch reads YAIRFMPPIAVFTLCWQIAL. Residues 66-68 are Periplasmic-facing; the sequence is GGQ. Residues 69–91 traverse the membrane as a helical segment; sequence LGPAVATALFALSLPMQGLWWLG. Over 92–151 the chain is Cytoplasmic; it reads KRSVTPLPPAILNWFYEVRGKLQESGQVLAPVEGKPDYQALADTLKRAFKQLDKTFLDDL.

This sequence belongs to the UPF0208 family.

It is found in the cell inner membrane. In Escherichia coli O6:H1 (strain CFT073 / ATCC 700928 / UPEC), this protein is UPF0208 membrane protein YfbV (yfbV).